The primary structure comprises 507 residues: ATP synthase subunit alpha (507 aa).

Position 168–175 (168–175) interacts with ATP; sequence GDRQTGKT.

This sequence belongs to the ATPase alpha/beta chains family. In terms of assembly, F-type ATPases have 2 components, CF(1) - the catalytic core - and CF(0) - the membrane proton channel. CF(1) has five subunits: alpha(3), beta(3), gamma(1), delta(1), epsilon(1). CF(0) has three main subunits: a(1), b(2) and c(9-12). The alpha and beta chains form an alternating ring which encloses part of the gamma chain. CF(1) is attached to CF(0) by a central stalk formed by the gamma and epsilon chains, while a peripheral stalk is formed by the delta and b chains.

Its subcellular location is the cell membrane. It catalyses the reaction ATP + H2O + 4 H(+)(in) = ADP + phosphate + 5 H(+)(out). In terms of biological role, produces ATP from ADP in the presence of a proton gradient across the membrane. The alpha chain is a regulatory subunit. In Mesomycoplasma hyopneumoniae (strain J / ATCC 25934 / NCTC 10110) (Mycoplasma hyopneumoniae), this protein is ATP synthase subunit alpha.